The following is a 238-amino-acid chain: Ribonuclease PH (238 aa).

Phosphate-binding positions include Arg-86 and 124-126 (GTR).

The protein belongs to the RNase PH family. As to quaternary structure, homohexameric ring arranged as a trimer of dimers.

It catalyses the reaction tRNA(n+1) + phosphate = tRNA(n) + a ribonucleoside 5'-diphosphate. Functionally, phosphorolytic 3'-5' exoribonuclease that plays an important role in tRNA 3'-end maturation. Removes nucleotide residues following the 3'-CCA terminus of tRNAs; can also add nucleotides to the ends of RNA molecules by using nucleoside diphosphates as substrates, but this may not be physiologically important. Probably plays a role in initiation of 16S rRNA degradation (leading to ribosome degradation) during starvation. In Azorhizobium caulinodans (strain ATCC 43989 / DSM 5975 / JCM 20966 / LMG 6465 / NBRC 14845 / NCIMB 13405 / ORS 571), this protein is Ribonuclease PH.